Reading from the N-terminus, the 197-residue chain is Phospholipid hydroperoxide glutathione peroxidase (197 aa).

Serine 40 is subject to Phosphoserine. Selenocysteine 73 is a catalytic residue. A non-standard amino acid (selenocysteine) is located at residue selenocysteine 73.

This sequence belongs to the glutathione peroxidase family. In terms of assembly, monomer. Has a tendency to form higher mass oligomers. Interacts with FUNDC1; this interaction promotes GPX4 recruitment into mitochondria through TOM/TIM complex where it is degraded by mitophagy. In terms of tissue distribution, expressed very intensively in the testis and weakly in lung, heart, and cerebellum.

The protein resides in the mitochondrion. It localises to the cytoplasm. The enzyme catalyses a hydroperoxy polyunsaturated fatty acid + 2 glutathione = a hydroxy polyunsaturated fatty acid + glutathione disulfide + H2O. It catalyses the reaction 2 glutathione + H2O2 = glutathione disulfide + 2 H2O. It carries out the reaction tert-butyl hydroperoxide + 2 glutathione = tert-butanol + glutathione disulfide + H2O. The catalysed reaction is cumene hydroperoxide + 2 glutathione = 2-phenylpropan-2-ol + glutathione disulfide + H2O. The enzyme catalyses (9S)-hydroperoxy-(10E,12Z)-octadecadienoate + 2 glutathione = (9S)-hydroxy-(10E,12Z)-octadecadienoate + glutathione disulfide + H2O. It catalyses the reaction (13S)-hydroperoxy-(9Z,11E)-octadecadienoate + 2 glutathione = (13S)-hydroxy-(9Z,11E)-octadecadienoate + glutathione disulfide + H2O. It carries out the reaction (5S)-hydroperoxy-(6E,8Z,11Z,14Z)-eicosatetraenoate + 2 glutathione = (5S)-hydroxy-(6E,8Z,11Z,14Z)-eicosatetraenoate + glutathione disulfide + H2O. The catalysed reaction is (12R)-hydroperoxy-(5Z,8Z,10E,14Z)-eicosatetraenoate + 2 glutathione = (12R)-hydroxy-(5Z,8Z,10E,14Z)-eicosatetraenoate + glutathione disulfide + H2O. The enzyme catalyses (12S)-hydroperoxy-(5Z,8Z,10E,14Z)-eicosatetraenoate + 2 glutathione = (12S)-hydroxy-(5Z,8Z,10E,14Z)-eicosatetraenoate + glutathione disulfide + H2O. It catalyses the reaction (15S)-hydroperoxy-(5Z,8Z,11Z,13E)-eicosatetraenoate + 2 glutathione = (15S)-hydroxy-(5Z,8Z,11Z,13E)-eicosatetraenoate + glutathione disulfide + H2O. It carries out the reaction (5S)-hydroperoxy-(6E,8Z,11Z,14Z,17Z)-eicosapentaenoate + 2 glutathione = (5S)-hydroxy-(6E,8Z,11Z,14Z,17Z)-eicosapentaenoate + glutathione disulfide + H2O. The catalysed reaction is (12S)-hydroperoxy-(5Z,8Z,10E,14Z,17Z)-eicosapentaenoate + 2 glutathione = (12S)-hydroxy-(5Z,8Z,10E,14Z,17Z)-eicosapentaenoate + glutathione disulfide + H2O. The enzyme catalyses (15S)-hydroperoxy-(5Z,8Z,11Z,13E,17Z)-eicosapentaenoate + 2 glutathione = (15S)-hydroxy-(5Z,8Z,11Z,13E,17Z)-eicosapentaenoate + glutathione disulfide + H2O. It catalyses the reaction (15S)-hydroperoxy-(11Z,13E)-eicosadienoate + 2 glutathione = (15S)-hydroxy-(11Z,13E)-eicosadienoate + glutathione disulfide + H2O. It carries out the reaction (17S)-hydroperoxy-(4Z,7Z,10Z,13Z,15E,19Z)-docosahexaenoate + 2 glutathione = (17S)-hydroxy-(4Z,7Z,10Z,13Z,15E,19Z)-docosahexaenoate + glutathione disulfide + H2O. The catalysed reaction is a hydroperoxy-1,2-diacyl-glycero-3-phosphocholine + 2 glutathione = a hydroxy-1,2-diacyl-glycero-3-phosphocholine + glutathione disulfide + H2O. Functionally, essential antioxidant peroxidase that directly reduces phospholipid hydroperoxide even if they are incorporated in membranes and lipoproteins. Can also reduce fatty acid hydroperoxide, cholesterol hydroperoxide and thymine hydroperoxide. Plays a key role in protecting cells from oxidative damage by preventing membrane lipid peroxidation. Required to prevent cells from ferroptosis, a non-apoptotic cell death resulting from an iron-dependent accumulation of lipid reactive oxygen species. The presence of selenocysteine (Sec) versus Cys at the active site is essential for life: it provides resistance to overoxidation and prevents cells against ferroptosis. The presence of Sec at the active site is also essential for the survival of a specific type of parvalbumin-positive interneurons, thereby preventing against fatal epileptic seizures. May be required to protect cells from the toxicity of ingested lipid hydroperoxides. Required for normal sperm development and male fertility. Essential for maturation and survival of photoreceptor cells. Plays a role in a primary T-cell response to viral and parasitic infection by protecting T-cells from ferroptosis and by supporting T-cell expansion. Plays a role of glutathione peroxidase in platelets in the arachidonic acid metabolism. Reduces hydroperoxy ester lipids formed by a 15-lipoxygenase that may play a role as down-regulator of the cellular 15-lipoxygenase pathway. Can also reduce small soluble hydroperoxides such as H2O2, cumene hydroperoxide and tert-butyl hydroperoxide. The polypeptide is Phospholipid hydroperoxide glutathione peroxidase (Macaca fuscata fuscata (Japanese macaque)).